The following is a 161-amino-acid chain: Nucleotide-binding protein BceJ2315_27070 (161 aa).

Belongs to the YajQ family.

In terms of biological role, nucleotide-binding protein. The protein is Nucleotide-binding protein BceJ2315_27070 of Burkholderia cenocepacia (strain ATCC BAA-245 / DSM 16553 / LMG 16656 / NCTC 13227 / J2315 / CF5610) (Burkholderia cepacia (strain J2315)).